A 945-amino-acid polypeptide reads, in one-letter code: Xylanolytic transcriptional activator xlnR (945 aa).

Disordered stretches follow at residues 1-33 (MSTPSIPQFPSPFSPFSSGSQSTGMAPSQTVGL) and 53-74 (AAGTGAGDGATSTSLRNSMSHA). A compositionally biased stretch (low complexity) spans 14–24 (SPFSSGSQSTG). The segment at residues 125 to 151 (CDQCNQLRTKCDGQHPCAHCIEFGLTC) is a DNA-binding region (zn(2)-C6 fungal-type). Disordered regions lie at residues 172 to 251 (AAAA…PSLG) and 559 to 601 (PPNV…INVT). Polar residues-rich tracts occupy residues 177–188 (HGSNGHSGQANA) and 218–251 (ISSQPSHMQHANNAGISGLHDSQTAPSHSQPSLG). Over residues 565 to 581 (ARQDGERDGDGEADRRH) the composition is skewed to basic and acidic residues.

Belongs to the xlnR/xlr1 family.

Its subcellular location is the nucleus. Functionally, transcriptional activator of the xylanolytic system. Involved in the regulation of extracellular cellulolytic and xylanolytic genes and in the regulation of the intracellular activities of D-xylose catabolic genes in the pentose catabolic pathway (PCP) in response to the presence of D-xylose. In Aspergillus kawachii (White koji mold), this protein is Xylanolytic transcriptional activator xlnR (xlnR).